The following is a 180-amino-acid chain: ATP-dependent protease subunit HslV (180 aa).

T8 is an active-site residue. 3 residues coordinate Na(+): G165, C168, and T171.

Belongs to the peptidase T1B family. HslV subfamily. In terms of assembly, a double ring-shaped homohexamer of HslV is capped on each side by a ring-shaped HslU homohexamer. The assembly of the HslU/HslV complex is dependent on binding of ATP.

The protein localises to the cytoplasm. The catalysed reaction is ATP-dependent cleavage of peptide bonds with broad specificity.. Its activity is regulated as follows. Allosterically activated by HslU binding. In terms of biological role, protease subunit of a proteasome-like degradation complex believed to be a general protein degrading machinery. This is ATP-dependent protease subunit HslV from Halalkalibacterium halodurans (strain ATCC BAA-125 / DSM 18197 / FERM 7344 / JCM 9153 / C-125) (Bacillus halodurans).